The following is a 60-amino-acid chain: Large ribosomal subunit protein bL32 (60 aa).

A compositionally biased stretch (basic residues) spans 1–16; that stretch reads MAVPRRKTSPSRRGMR. The tract at residues 1–60 is disordered; it reads MAVPRRKTSPSRRGMRRSADAIKKPTYAEDKDSGELRRPHHLDLKTGMYKGRQVLIKKES. Over residues 17–44 the composition is skewed to basic and acidic residues; the sequence is RSADAIKKPTYAEDKDSGELRRPHHLDL.

Belongs to the bacterial ribosomal protein bL32 family.

The polypeptide is Large ribosomal subunit protein bL32 (Rhodopseudomonas palustris (strain BisA53)).